We begin with the raw amino-acid sequence, 1809 residues long: Proprotein convertase subtilisin/kexin type 5 (1809 aa).

The N-terminal stretch at 1 to 34 (MDWGWGSRCCRPGRRDLLCVLALLAGCLLPVCRT) is a signal peptide. Residues 35–116 (RVYTNHWAVK…QQVVKKRTKR (82 aa)) constitute a propeptide that is removed on maturation. The Extracellular segment spans residues 117 to 1700 (DYDLSRAQST…DTVFHEHTKT (1584 aa)). The Peptidase S8 domain maps to 136 to 455 (MWYMHCSDNT…FGLMDAEAMV (320 aa)). Active-site charge relay system residues include D173 and H214. 2 N-linked (GlcNAc...) asparagine glycosylation sites follow: N227 and N383. S388 functions as the Charge relay system in the catalytic mechanism. The P/Homo B domain maps to 463 to 603 (TVPQQHVCVE…SLVLYGTSVQ (141 aa)). The short motif at 521 to 523 (RGD) is the Cell attachment site element. 21 FU repeats span residues 632 to 682 (EDYA…GHFH), 685 to 732 (KKRC…GSYQ), 736 to 779 (KNIC…GQFF), 781 to 826 (GHDC…SYYL), 834 to 881 (YKSC…GEYI), 884 to 929 (QGHC…WKFE), 931 to 964 (KKQC…QDSE), 965 to 1010 (YGEC…KTFG), 1012 to 1054 (KWEC…GFYG), 1058 to 1099 (LGEC…PTWP), 1137 to 1179 (TRQY…GTWL), 1183 to 1230 (SSSC…GFYA), 1232 to 1276 (DGVC…KHVA), 1278 to 1321 (EGVC…NFYP), 1323 to 1369 (MRQC…GTYK), 1373 to 1418 (NDEC…IEYW), 1422 to 1467 (SHRC…GYHT), 1471 to 1516 (SHQC…GYYG), 1520 to 1567 (SGRC…HYYA), 1571 to 1616 (AQTC…GEYR), and 1622 to 1669 (NFNC…SHPH). The interval 638–1685 (CDPECSEVGC…DCQSSTDECI (1048 aa)) is CRM (Cys-rich motif). N667 carries an N-linked (GlcNAc...) asparagine glycan. Residues N754, N804, and N854 are each glycosylated (N-linked (GlcNAc...) asparagine). Residues N1642 and N1664 are each glycosylated (N-linked (GlcNAc...) asparagine). Residues 1701-1721 (ALLVTSGAMLLLLLGAAVVVW) form a helical membrane-spanning segment. Residues 1722-1809 (RKSRSQPVAK…EYDDESYSYQ (88 aa)) lie on the Cytoplasmic side of the membrane. 2 AC regions span residues 1757 to 1776 (VIEY…IVYM) and 1788 to 1809 (YGLL…YSYQ).

Belongs to the peptidase S8 family. As to expression, expressed in the intestine, brain, adrenal gland, anterior pituitary, thyroid, ovaries, testis and lung. Highest levels are found in the gut, duodenum, jejunum and ileum. Expression is higher in female than in male reproductive organs.

The protein resides in the secreted. Its subcellular location is the endomembrane system. Its function is as follows. Serine endoprotease that processes various proproteins by cleavage at paired basic amino acids, recognizing the RXXX[KR]R consensus motif. Likely functions in the constitutive and regulated secretory pathways. Plays an essential role in pregnancy establishment by proteolytic activation of a number of important factors such as BMP2, CALD1 and alpha-integrins. May be responsible for the maturation of gastrointestinal peptides. May be involved in the cellular proliferation of adrenal cortex via the activation of growth factors. This Rattus norvegicus (Rat) protein is Proprotein convertase subtilisin/kexin type 5 (Pcsk5).